Here is a 605-residue protein sequence, read N- to C-terminus: DNA primase (605 aa).

The segment at 38–62 (CPFHDEKTPSFTVSEDKQICHCFGC) adopts a CHC2-type zinc-finger fold. Positions 260–341 (DEIVLLEGFM…NVFVIQLPSG (82 aa)) constitute a Toprim domain. 3 residues coordinate Mg(2+): Glu-266, Asp-310, and Asp-312.

It belongs to the DnaG primase family. In terms of assembly, monomer. Interacts with DnaB. Zn(2+) serves as cofactor. Mg(2+) is required as a cofactor.

The enzyme catalyses ssDNA + n NTP = ssDNA/pppN(pN)n-1 hybrid + (n-1) diphosphate.. Functionally, RNA polymerase that catalyzes the synthesis of short RNA molecules used as primers for DNA polymerase during DNA replication. The protein is DNA primase of Staphylococcus aureus (strain MSSA476).